A 635-amino-acid polypeptide reads, in one-letter code: Multiple inositol polyphosphate phosphatase 1 (635 aa).

Residues 1-23 form the signal peptide; sequence MMVKIKNIIILFCIFGLLSNVSS. The Extracellular portion of the chain corresponds to 24–565; that stretch reads LSSSSSSSQS…GNDSHSKKSS (542 aa). The tract at residues 66–102 is disordered; that stretch reads KNGDSNSQGDGSSGNSNSNSNSNSNSNSNSDSSNEPP. The segment covering 67–99 has biased composition (low complexity); that stretch reads NGDSNSQGDGSSGNSNSNSNSNSNSNSNSDSSN. His116 is a catalytic residue. Positions 380-421 are enriched in low complexity; the sequence is SSSSSSSSSSNNGDNSGSNGSSGSGSSTSTSSNDNGSTNNND. The tract at residues 380–425 is disordered; it reads SSSSSSSSSSNNGDNSGSNGSSGSGSSTSTSSNDNGSTNNNDNKVE. Residues 566 to 586 form a helical membrane-spanning segment; that stretch reads YFLAIFIPITFLVGGTIGGIF. Over 587-635 the chain is Cytoplasmic; the sequence is TYFSYEKIMQVKNRKKLTQYGNDEFISSPKSKSFSFKPTKFDSRSPLIQ. A compositionally biased stretch (low complexity) spans 614–624; the sequence is SPKSKSFSFKP. The segment at 614–635 is disordered; that stretch reads SPKSKSFSFKPTKFDSRSPLIQ.

This sequence belongs to the histidine acid phosphatase family. MINPP1 subfamily.

It is found in the membrane. The enzyme catalyses 1D-myo-inositol hexakisphosphate + H2O = 1D-myo-inositol 1,2,4,5,6-pentakisphosphate + phosphate. It catalyses the reaction 1D-myo-inositol 1,2,4,5,6-pentakisphosphate + H2O = 1D-myo-inositol 1,2,5,6-tetrakisphosphate + phosphate. The catalysed reaction is 1D-myo-inositol 1,2,5,6-tetrakisphosphate + H2O = 1D-myo-inositol 1,2,6-trisphosphate + phosphate. It carries out the reaction 1D-myo-inositol 1,2,6-trisphosphate + H2O = 1D-myo-inositol 1,2-bisphosphate + phosphate. The enzyme catalyses 1D-myo-inositol 1,2-bisphosphate + H2O = 1D-myo-inositol 2-phosphate + phosphate. It catalyses the reaction (2R)-2,3-bisphosphoglycerate + H2O = (2R)-2-phosphoglycerate + phosphate. Functionally, probable multiple inositol polyphosphate phosphatase that hydrolyzes 1D-myo-inositol 1,3,4,5,6-pentakisphosphate (InsP5[2OH]) and 1D-myo-inositol hexakisphosphate (InsP6) to a range of less phosphorylated inositol phosphates. This regulates the availability of these various small molecule second messengers and metal chelators which control many aspects of cell physiology. May have a dual substrate specificity, and function as a 2,3-bisphosphoglycerate 3-phosphatase hydrolyzing 2,3-bisphosphoglycerate to 2-phosphoglycerate. 2,3-bisphosphoglycerate (BPG) is formed as part of the Rapoport-Luebering glycolytic bypass. This chain is Multiple inositol polyphosphate phosphatase 1 (mipp1), found in Dictyostelium discoideum (Social amoeba).